A 957-amino-acid chain; its full sequence is Glycine dehydrogenase (decarboxylating) (957 aa).

An N6-(pyridoxal phosphate)lysine modification is found at K702.

Belongs to the GcvP family. The glycine cleavage system is composed of four proteins: P, T, L and H. The cofactor is pyridoxal 5'-phosphate.

The enzyme catalyses N(6)-[(R)-lipoyl]-L-lysyl-[glycine-cleavage complex H protein] + glycine + H(+) = N(6)-[(R)-S(8)-aminomethyldihydrolipoyl]-L-lysyl-[glycine-cleavage complex H protein] + CO2. The glycine cleavage system catalyzes the degradation of glycine. The P protein binds the alpha-amino group of glycine through its pyridoxal phosphate cofactor; CO(2) is released and the remaining methylamine moiety is then transferred to the lipoamide cofactor of the H protein. The polypeptide is Glycine dehydrogenase (decarboxylating) (Bradyrhizobium sp. (strain BTAi1 / ATCC BAA-1182)).